Consider the following 517-residue polypeptide: Crotonobetaine/carnitine--CoA ligase (517 aa).

The protein belongs to the ATP-dependent AMP-binding enzyme family.

It carries out the reaction 4-(trimethylamino)butanoate + ATP + CoA = 4-(trimethylamino)butanoyl-CoA + AMP + diphosphate. It catalyses the reaction crotonobetaine + ATP + CoA = crotonobetainyl-CoA + AMP + diphosphate. The catalysed reaction is (R)-carnitine + ATP + CoA = (R)-carnitinyl-CoA + AMP + diphosphate. It functions in the pathway amine and polyamine metabolism; carnitine metabolism. In terms of biological role, catalyzes the transfer of CoA to carnitine, generating the initial carnitinyl-CoA needed for the CaiB reaction cycle. Also has activity toward crotonobetaine and gamma-butyrobetaine. The protein is Crotonobetaine/carnitine--CoA ligase of Escherichia coli O1:K1 / APEC.